The sequence spans 622 residues: Low affinity potassium transport system protein Kup (622 aa).

12 consecutive transmembrane segments (helical) span residues Leu-9–Leu-29, Val-49–Leu-69, Val-101–Pro-121, Pro-137–Ile-157, Val-165–Val-185, Ala-212–Tyr-232, Trp-247–Leu-267, Pro-276–Ala-296, Ile-337–Phe-357, Leu-363–Cys-383, Ala-397–Val-417, and Ile-419–Thr-439.

It belongs to the HAK/KUP transporter (TC 2.A.72) family.

The protein localises to the cell inner membrane. It catalyses the reaction K(+)(in) + H(+)(in) = K(+)(out) + H(+)(out). Responsible for the low-affinity transport of potassium into the cell. Likely operates as a K(+):H(+) symporter. This Pectobacterium atrosepticum (strain SCRI 1043 / ATCC BAA-672) (Erwinia carotovora subsp. atroseptica) protein is Low affinity potassium transport system protein Kup.